The primary structure comprises 172 residues: NADH-quinone oxidoreductase subunit B (172 aa).

The [4Fe-4S] cluster site is built by cysteine 46, cysteine 47, cysteine 111, and cysteine 141.

The protein belongs to the complex I 20 kDa subunit family. In terms of assembly, NDH-1 is composed of 14 different subunits. Subunits NuoB, C, D, E, F, and G constitute the peripheral sector of the complex. [4Fe-4S] cluster is required as a cofactor.

It is found in the cell membrane. It catalyses the reaction a quinone + NADH + 5 H(+)(in) = a quinol + NAD(+) + 4 H(+)(out). NDH-1 shuttles electrons from NADH, via FMN and iron-sulfur (Fe-S) centers, to quinones in the respiratory chain. The immediate electron acceptor for the enzyme in this species is believed to be a menaquinone. Couples the redox reaction to proton translocation (for every two electrons transferred, four hydrogen ions are translocated across the cytoplasmic membrane), and thus conserves the redox energy in a proton gradient. In Bacillus cereus (strain G9842), this protein is NADH-quinone oxidoreductase subunit B.